Consider the following 740-residue polypeptide: Ion-translocating oxidoreductase complex subunit C (740 aa).

4Fe-4S ferredoxin-type domains follow at residues G369–Y397 and K407–F436. Residues C377, C380, C383, C387, C416, C419, C422, and C426 each contribute to the [4Fe-4S] cluster site. The segment at K602–A717 is disordered. 2 stretches are compositionally biased toward low complexity: residues Q605–Q615 and Q637–Q647.

This sequence belongs to the 4Fe4S bacterial-type ferredoxin family. RnfC subfamily. In terms of assembly, the complex is composed of six subunits: RsxA, RsxB, RsxC, RsxD, RsxE and RsxG. The cofactor is [4Fe-4S] cluster.

It is found in the cell inner membrane. Part of a membrane-bound complex that couples electron transfer with translocation of ions across the membrane. Required to maintain the reduced state of SoxR. The sequence is that of Ion-translocating oxidoreductase complex subunit C from Escherichia coli (strain ATCC 8739 / DSM 1576 / NBRC 3972 / NCIMB 8545 / WDCM 00012 / Crooks).